Consider the following 122-residue polypeptide: Large ribosomal subunit protein bL12 (122 aa).

This sequence belongs to the bacterial ribosomal protein bL12 family. In terms of assembly, homodimer. Part of the ribosomal stalk of the 50S ribosomal subunit. Forms a multimeric L10(L12)X complex, where L10 forms an elongated spine to which 2 to 4 L12 dimers bind in a sequential fashion. Binds GTP-bound translation factors.

Functionally, forms part of the ribosomal stalk which helps the ribosome interact with GTP-bound translation factors. Is thus essential for accurate translation. The protein is Large ribosomal subunit protein bL12 of Streptococcus pneumoniae serotype 19F (strain G54).